Reading from the N-terminus, the 182-residue chain is Probable inosine/xanthosine triphosphatase (182 aa).

2 residues coordinate Mg(2+): E42 and D69.

It belongs to the YjjX NTPase family. Homodimer. Mg(2+) is required as a cofactor. Mn(2+) serves as cofactor.

It catalyses the reaction XTP + H2O = XDP + phosphate + H(+). The enzyme catalyses ITP + H2O = IDP + phosphate + H(+). Phosphatase that hydrolyzes non-canonical purine nucleotides such as XTP and ITP to their respective diphosphate derivatives. Probably excludes non-canonical purines from DNA/RNA precursor pool, thus preventing their incorporation into DNA/RNA and avoiding chromosomal lesions. This chain is Probable inosine/xanthosine triphosphatase, found in Methanothermobacter thermautotrophicus (strain ATCC 29096 / DSM 1053 / JCM 10044 / NBRC 100330 / Delta H) (Methanobacterium thermoautotrophicum).